The sequence spans 60 residues: Beta-defensin 8 (60 aa).

An N-terminal signal peptide occupies residues 1–22 (MRIHYLLFTFLLVLLSPLAAFS). Residues 23-25 (QKI) constitute a propeptide that is removed on maturation. Intrachain disulfides connect cysteine 31–cysteine 58, cysteine 38–cysteine 52, and cysteine 42–cysteine 59.

The protein belongs to the beta-defensin family. As to expression, most highly expressed in testis and heart.

The protein resides in the secreted. Functionally, a synthetic peptide displays antimicrobial activities against S.aureus, P.aeruginosa, E.coli and B.cepacia. The antimicrobial activity against S.aureus, E.coli and B.cepacia is reduced in raised concentration of NaCl, but its action against P.aeruginosa is independent of NaCl concentration. This Mus musculus (Mouse) protein is Beta-defensin 8 (Defb8).